Reading from the N-terminus, the 226-residue chain is 3-dehydroquinate dehydratase (226 aa).

Residues Glu-30–Arg-32 and Arg-62 each bind 3-dehydroquinate. His-118 serves as the catalytic Proton donor/acceptor. Lys-143 acts as the Schiff-base intermediate with substrate in catalysis. 3-dehydroquinate contacts are provided by Arg-186, Ser-205, and Gln-209.

The protein belongs to the type-I 3-dehydroquinase family. In terms of assembly, homodimer.

The catalysed reaction is 3-dehydroquinate = 3-dehydroshikimate + H2O. It participates in metabolic intermediate biosynthesis; chorismate biosynthesis; chorismate from D-erythrose 4-phosphate and phosphoenolpyruvate: step 3/7. Involved in the third step of the chorismate pathway, which leads to the biosynthesis of aromatic amino acids. Catalyzes the cis-dehydration of 3-dehydroquinate (DHQ) and introduces the first double bond of the aromatic ring to yield 3-dehydroshikimate. This chain is 3-dehydroquinate dehydratase, found in Streptococcus equi subsp. zooepidemicus (strain H70).